The primary structure comprises 72 residues: Translation initiation factor IF-1 (72 aa).

An S1-like domain is found at methionine 1–arginine 72.

This sequence belongs to the IF-1 family. As to quaternary structure, component of the 30S ribosomal translation pre-initiation complex which assembles on the 30S ribosome in the order IF-2 and IF-3, IF-1 and N-formylmethionyl-tRNA(fMet); mRNA recruitment can occur at any time during PIC assembly.

It is found in the cytoplasm. Functionally, one of the essential components for the initiation of protein synthesis. Stabilizes the binding of IF-2 and IF-3 on the 30S subunit to which N-formylmethionyl-tRNA(fMet) subsequently binds. Helps modulate mRNA selection, yielding the 30S pre-initiation complex (PIC). Upon addition of the 50S ribosomal subunit IF-1, IF-2 and IF-3 are released leaving the mature 70S translation initiation complex. This chain is Translation initiation factor IF-1, found in Vibrio cholerae serotype O1 (strain ATCC 39541 / Classical Ogawa 395 / O395).